Here is a 779-residue protein sequence, read N- to C-terminus: Protein WEAK CHLOROPLAST MOVEMENT UNDER BLUE LIGHT-like 1 (779 aa).

Positions 1-119 (MEDLKTTDAL…NAVSPRPLYS (119 aa)) are disordered. The span at 79–88 (DSPTTPSFVS) shows a compositional bias: polar residues. At Ser139 the chain carries Phosphoserine. 3 coiled-coil regions span residues 182 to 503 (RMKV…KQRE), 532 to 587 (KETR…ESRL), and 657 to 715 (AVSE…KWRE). Low complexity predominate over residues 650-661 (ANARVAAAVSEV). Disordered regions lie at residues 650-674 (ANAR…SLEK) and 694-759 (EKAE…NPVK). Basic and acidic residues-rich tracts occupy residues 662 to 674 (GEAK…SLEK) and 694 to 718 (EKAE…EVSE). Polar residues predominate over residues 741-753 (TSVSNETETNPIP).

This sequence belongs to the WEB family.

The sequence is that of Protein WEAK CHLOROPLAST MOVEMENT UNDER BLUE LIGHT-like 1 (WEL1) from Arabidopsis thaliana (Mouse-ear cress).